We begin with the raw amino-acid sequence, 571 residues long: MYYMLIGFIIVVIAIISAGYILKRKHYQRINELEETKIKLRERPVIDELSKVKKLKLTGQTEALFESWRSSWDEIETRLFPDLEEVLLEAEMNTDRYKFRSATYVENDIEQMLVVIEKQMDQILGGLKELLISEEKNAKESRMTKEKFAELRREVLTRGFKLGDTLPYVETKLDELAENLNRYDLLTDQGDHLEAREIVLIVQKEMKVIEAQMERIPSLLHETDTILPEEMNKLRAGYEEMVRKGYYLAQMELDKEITRMKTQIDKMKRNVINLDLDEAEQGIEELHNEIDLFYDTLEHEAEARHFVKENHSPTSDKLQRQNTVSDALAEQITEVKQTYHVAEDDLAVYLKTSAKLSEAKENFEQLTALIASGEIAYSAAQDTLKEIDAALISIGAEQDKFAEELRSLRKDELEARDDAERMRRAIVTLDRKMERERLPGLPEEYLSLREHMGESIDALEKRLEEKPLNMKAVTQDWRIAEEDLNHLTEKAEEMMENVRLVEHVIQYANRYRLRNKELADELVQAENHFYNDYQYKKALEIAVTALEKVETGAFKKVEKAYESKVSVDDIE.

The Extracellular segment spans residues 1–3 (MYY). The chain crosses the membrane as a helical span at residues 4 to 22 (MLIGFIIVVIAIISAGYIL). Over 23–571 (KRKHYQRINE…ESKVSVDDIE (549 aa)) the chain is Cytoplasmic. Coiled-coil stretches lie at residues 169-214 (VETK…AQME), 249-298 (AQME…DTLE), 326-374 (DALA…ASGE), 400-438 (KFAE…RERL), and 474-529 (TQDW…ENHF).

This sequence belongs to the EzrA family.

It localises to the cell membrane. Its function is as follows. Negative regulator of FtsZ ring formation; modulates the frequency and position of FtsZ ring formation. Inhibits FtsZ ring formation at polar sites. Interacts either with FtsZ or with one of its binding partners to promote depolymerization. The sequence is that of Septation ring formation regulator EzrA from Listeria welshimeri serovar 6b (strain ATCC 35897 / DSM 20650 / CCUG 15529 / CIP 8149 / NCTC 11857 / SLCC 5334 / V8).